The sequence spans 621 residues: tRNA uridine 5-carboxymethylaminomethyl modification enzyme MnmG (621 aa).

9 to 14 (GGGHAG) contributes to the FAD binding site. Position 270 to 284 (270 to 284 (GPRYCPSIEDKIVKF)) interacts with NAD(+).

The protein belongs to the MnmG family. In terms of assembly, homodimer. Heterotetramer of two MnmE and two MnmG subunits. FAD is required as a cofactor.

It localises to the cytoplasm. NAD-binding protein involved in the addition of a carboxymethylaminomethyl (cmnm) group at the wobble position (U34) of certain tRNAs, forming tRNA-cmnm(5)s(2)U34. The sequence is that of tRNA uridine 5-carboxymethylaminomethyl modification enzyme MnmG from Borreliella afzelii (strain PKo) (Borrelia afzelii).